We begin with the raw amino-acid sequence, 128 residues long: Platelet basic protein (128 aa).

A signal peptide spans 1–34 (MSLRLDTTPSCNSARPLHALQVLLLLSLLLTALA). 2 disulfide bridges follow: cysteine 63/cysteine 89 and cysteine 65/cysteine 105.

The protein belongs to the intercrine alpha (chemokine CxC) family. Beta-thromboglobulin is a homotetramer. Post-translationally, proteolytic removal of residues 1-9 produces the active peptide connective tissue-activating peptide III (CTAP-III) (low-affinity platelet factor IV (LA-PF4)). Proteolytic removal of residues 1-13 produces the active peptide beta-thromboglobulin, which is released from platelets along with platelet factor 4 and platelet-derived growth factor. In terms of processing, NAP-2(1-66) is produced by proteolytical processing, probably after secretion by leukocytes other than neutrophils. Post-translationally, NAP-2(73) and NAP-2(74) seem not be produced by proteolytical processing of secreted precursors but are released in an active form from platelets.

The protein resides in the secreted. Functionally, LA-PF4 stimulates DNA synthesis, mitosis, glycolysis, intracellular cAMP accumulation, prostaglandin E2 secretion, and synthesis of hyaluronic acid and sulfated glycosaminoglycan. It also stimulates the formation and secretion of plasminogen activator by human synovial cells. NAP-2 is a ligand for CXCR1 and CXCR2, and NAP-2, NAP-2(73), NAP-2(74), NAP-2(1-66), and most potent NAP-2(1-63) are chemoattractants and activators for neutrophils. TC-1 and TC-2 are antibacterial proteins, in vitro released from activated platelet alpha-granules. CTAP-III(1-81) is more potent than CTAP-III desensitize chemokine-induced neutrophil activation. The polypeptide is Platelet basic protein (PPBP) (Homo sapiens (Human)).